We begin with the raw amino-acid sequence, 656 residues long: L-type lectin-domain containing receptor kinase S.1 (656 aa).

An N-terminal signal peptide occupies residues 1–29 (MSWQWRRRQWPSPLLLILIVLHLVSSSSA). The segment at 30-273 (IDFLYNSFSS…ARRILAWSLS (244 aa)) is legume-lectin like. The Extracellular segment spans residues 30–304 (IDFLYNSFSS…SSSLSTGAIA (275 aa)). N-linked (GlcNAc...) asparagine glycans are attached at residues Asn42, Asn63, Asn121, Asn139, Asn191, Asn219, Asn282, and Asn293. Residues 305 to 325 (GIVIGCVVFVALIGFGGYLIW) traverse the membrane as a helical segment. Over 326–656 (KKLMREEEEE…AAADSTAAHA (331 aa)) the chain is Cytoplasmic. The 279-residue stretch at 361–639 (FSNDRLLGSG…LLGSPQEDLL (279 aa)) folds into the Protein kinase domain. ATP is bound by residues 367 to 375 (LGSGGFGKV) and Lys389. Residue Asp485 is the Proton acceptor of the active site.

This sequence in the C-terminal section; belongs to the protein kinase superfamily. Ser/Thr protein kinase family. It in the N-terminal section; belongs to the leguminous lectin family.

It localises to the cell membrane. The catalysed reaction is L-seryl-[protein] + ATP = O-phospho-L-seryl-[protein] + ADP + H(+). It carries out the reaction L-threonyl-[protein] + ATP = O-phospho-L-threonyl-[protein] + ADP + H(+). Its function is as follows. Involved in resistance response to the pathogenic oomycetes Phytophthora infestans and Phytophthora capsici and to the pathogenic bacteria Pseudomonas syringae. The chain is L-type lectin-domain containing receptor kinase S.1 from Arabidopsis thaliana (Mouse-ear cress).